Consider the following 87-residue polypeptide: MSASADSLGAAAALDKYGDEDIFSLLIRYGLYVGALFQFVCISAAVLMENNPDGQSNPESGEVTEREGEPVRTRLHKIRKLEKKKRR.

Residues 25-47 (LLIRYGLYVGALFQFVCISAAVL) traverse the membrane as a helical segment. The segment at 51–87 (NPDGQSNPESGEVTEREGEPVRTRLHKIRKLEKKKRR) is disordered. Residues 63-72 (VTEREGEPVR) show a composition bias toward basic and acidic residues. The span at 73 to 87 (TRLHKIRKLEKKKRR) shows a compositional bias: basic residues.

It belongs to the UPF0239 family.

The protein localises to the membrane. The polypeptide is Protein anon-73B1 (anon-73B1) (Drosophila melanogaster (Fruit fly)).